We begin with the raw amino-acid sequence, 752 residues long: MAP/microtubule affinity-regulating kinase 4 (752 aa).

The tract at residues 1-36 is disordered; sequence MSSRTALAPGNDRNSDTHGTLGSGRSSDKGPSWSSR. Residues 59–310 enclose the Protein kinase domain; it reads YRLLRTIGKG…LEQIMKDKWI (252 aa). Residues 65 to 73 and Lys-88 contribute to the ATP site; that span reads IGKGNFAKV. Asp-181 acts as the Proton acceptor in catalysis. Thr-214 is subject to Phosphothreonine; by LKB1. One can recognise a UBA domain in the interval 324–368; the sequence is EPEEDFGDTKRIEVMVGMGYTREEIKEALTNQKYNEVTATYLLLG. The disordered stretch occupies residues 385-615; sequence ARVRAPSDTT…SGRPRPTTNL (231 aa). Over residues 391–406 the composition is skewed to low complexity; that stretch reads SDTTNGTSSSKGSSHN. Phosphoserine is present on residues Ser-423 and Ser-543. Low complexity predominate over residues 544–553; that stretch reads PSSHSLAPPS. Positions 703–752 constitute a KA1 domain; it reads AGGPEPLSHFEVEVCQLPRPGLRGVLFRRVAGTALAFRTLVTRISNDLEL.

The protein belongs to the protein kinase superfamily. CAMK Ser/Thr protein kinase family. SNF1 subfamily. Interacts with MAPT/TAU. Interacts with gamma-tubulin. Interacts with ODF2. Interacts with USP9X. Interacts with YWHAQ. Interacts with NLRP3; promoting NLRP3 recruitment to microtubule organizing center (MTOC). The cofactor is Mg(2+). Post-translationally, ubiquitinated with 'Lys-29'- and 'Lys-33'-linked polyubiquitins which appear to impede LKB1-mediated phosphorylation. Deubiquitinated by USP9X. Phosphorylated at Thr-214 by STK11/LKB1 in complex with STE20-related adapter-alpha (STRADA) pseudo kinase and CAB39. Phosphorylated throughout the cell cycle. In terms of tissue distribution, isoform 1 and isoform 2 show similar expression patterns in the central nervous system and are present in the same subsets of neurons including pyramidal and non-pyramidal neurons in the cerebral cortex and hippocampus, cerebellar Purkinje cells, and interneurons and motor neurons in the spinal cord but not in glial cells (at protein level). Isoform 2 is the major isoform in brain and cerebellum. Also expressed in spleen, liver, small intestine, colon, kidney, tongue, testis and lung. Isoform 1 and isoform 2 are expressed at similar levels in heart.

The protein localises to the cytoplasm. The protein resides in the cytoskeleton. Its subcellular location is the microtubule organizing center. It is found in the centrosome. It localises to the cilium axoneme. The protein localises to the cilium basal body. The protein resides in the cell projection. Its subcellular location is the dendrite. It catalyses the reaction L-seryl-[protein] + ATP = O-phospho-L-seryl-[protein] + ADP + H(+). The catalysed reaction is L-threonyl-[protein] + ATP = O-phospho-L-threonyl-[protein] + ADP + H(+). Activated by phosphorylation on Thr-214. Its function is as follows. Serine/threonine-protein kinase. Phosphorylates the microtubule-associated protein MAPT/TAU. Also phosphorylates the microtubule-associated proteins MAP2 and MAP4. Involved in regulation of the microtubule network, causing reorganization of microtubules into bundles. Required for the initiation of axoneme extension during cilium assembly. Regulates the centrosomal location of ODF2 and phosphorylates ODF2 in vitro. Plays a role in cell cycle progression, specifically in the G1/S checkpoint. Reduces neuronal cell survival. Plays a role in energy homeostasis by regulating satiety and metabolic rate. Promotes adipogenesis by activating JNK1 and inhibiting the p38MAPK pathway, and triggers apoptosis by activating the JNK1 pathway. Phosphorylates mTORC1 complex member RPTOR and acts as a negative regulator of the mTORC1 complex, probably due to disruption of the interaction between phosphorylated RPTOR and the RRAGA/RRAGC heterodimer which is required for mTORC1 activation. Involved in NLRP3 positioning along microtubules by mediating NLRP3 recruitment to microtubule organizing center (MTOC) upon inflammasome activation. The sequence is that of MAP/microtubule affinity-regulating kinase 4 from Mus musculus (Mouse).